A 1020-amino-acid chain; its full sequence is Protein CLASP-2 (1020 aa).

Residues 259 to 271 (ASDAASSSTSINS) are compositionally biased toward low complexity. Disordered regions lie at residues 259 to 280 (ASDAASSSTSINSERGTAPFRS), 329 to 387 (PMTT…RPSA), and 419 to 461 (LQKA…ALDT). Residues 329 to 343 (PMTTRTLSKIDTSPG) show a composition bias toward polar residues. Residues 372–381 (SQPGSRNGSP) are compositionally biased toward low complexity. Polar residues predominate over residues 450-460 (QKATPQKSALD). Residues 954–992 (LAPCVIKSYDSPSSAVRKTAVYCLVAMVNKLGMKTMEPH) form an HEAT repeat.

The protein belongs to the CLASP family. As to quaternary structure, interacts with hcp-1 and hcp-2.

It localises to the cytoplasm. It is found in the cytoskeleton. The protein resides in the microtubule organizing center. Its subcellular location is the centrosome. The protein localises to the chromosome. It localises to the centromere. It is found in the kinetochore. The protein resides in the spindle. Its function is as follows. Probable microtubule plus-end tracking protein that promotes the stabilization of dynamic microtubules. Required for the formation of mitotic and meiotic spindles. Specifically promotes the polymerization of kinetochore-bound microtubules. Also required for cytoplasmic streaming. Essential for embryonic development. The sequence is that of Protein CLASP-2 (cls-2) from Caenorhabditis elegans.